Reading from the N-terminus, the 103-residue chain is Large ribosomal subunit protein bL21 (103 aa).

This sequence belongs to the bacterial ribosomal protein bL21 family. In terms of assembly, part of the 50S ribosomal subunit. Contacts protein L20.

This protein binds to 23S rRNA in the presence of protein L20. This Parvibaculum lavamentivorans (strain DS-1 / DSM 13023 / NCIMB 13966) protein is Large ribosomal subunit protein bL21.